The sequence spans 358 residues: WD repeat domain phosphoinositide-interacting protein 4 (358 aa).

2 WD repeats span residues Ala-2 to His-40 and Ala-188 to Glu-228. A L/FRRG motif motif is present at residues Leu-229–Gly-232. Residues Thr-233–Arg-272 form a WD 3 repeat.

The protein belongs to the WD repeat PROPPIN family.

The protein resides in the preautophagosomal structure. In terms of biological role, component of the autophagy machinery that controls the major intracellular degradation process by which cytoplasmic materials are packaged into autophagosomes and delivered to lysosomes for degradation. Binds phosphatidylinositol 3-phosphate (PtdIns3P). The polypeptide is WD repeat domain phosphoinositide-interacting protein 4 (wdr45) (Danio rerio (Zebrafish)).